Reading from the N-terminus, the 346-residue chain is MHLMEFPREVILGKNLVPEVNNVIKRLKLESPGLVVYGPVTKKIAGESVKKAIRDEFDVYSITVKKAHIGEVEKVEAKIRDYNIKWAIAVGGGSIIDVTKLASYRSGIPFISFPTTASHDGIASANASIRGIEAKTSIKARPPIAVIADIEVIKTAPRRYLAAGVGDVISNITAVRDWKLAHKLKGEYFSEYAAALSLMSAKMVIRDAEIIRLGNDEGVRKVIKALISSGVAMSIAGSSRPASGAEHLFSHALDLLLDKPALHGEQTGIGTIIMAYLHGINWRKIKETLKTVGAPTSAYELGIDPEIIIEALTIAHKIRPERYTILGKEGLTREAAEKAAKITGVI.

Residues 93-97 (GSIID) and 115-118 (TTAS) each bind NAD(+). Aspartate 120 is a binding site for substrate. Serine 124 serves as a coordination point for NAD(+). Aspartate 167 serves as a coordination point for substrate. Zn(2+)-binding residues include aspartate 167 and histidine 247. Histidine 251 provides a ligand contact to substrate. Residue histidine 263 participates in Zn(2+) binding.

This sequence belongs to the glycerol-1-phosphate dehydrogenase family. It depends on Zn(2+) as a cofactor.

The protein resides in the cytoplasm. The catalysed reaction is sn-glycerol 1-phosphate + NAD(+) = dihydroxyacetone phosphate + NADH + H(+). It carries out the reaction sn-glycerol 1-phosphate + NADP(+) = dihydroxyacetone phosphate + NADPH + H(+). Its pathway is membrane lipid metabolism; glycerophospholipid metabolism. Catalyzes the NAD(P)H-dependent reduction of dihydroxyacetonephosphate (DHAP or glycerone phosphate) to glycerol 1-phosphate (G1P). The G1P thus generated is used as the glycerophosphate backbone of phospholipids in the cellular membranes of Archaea. In Pyrococcus abyssi (strain GE5 / Orsay), this protein is Glycerol-1-phosphate dehydrogenase [NAD(P)+].